We begin with the raw amino-acid sequence, 1202 residues long: Protein jagged-2 (1202 aa).

At 1 to 1037 (GACCDGDGRT…ETVVMGGSST (1037 aa)) the chain is on the extracellular side. N107 carries N-linked (GlcNAc...) asparagine glycosylation. The 45-residue stretch at 150-194 (VRCDENYYSATCNKFCRPRNDFFGHYTCDQYGNKACMDGWMGKEC) folds into the DSL domain. 42 disulfide bridges follow: C152–C161, C165–C177, C185–C194, C199–C210, C203–C216, C218–C227, C230–C241, C236–C247, C249–C258, C265–C277, C271–C287, C289–C298, C305–C316, C310–C325, C327–C336, C343–C354, C348–C363, C365–C374, C381–C392, C386–C401, C403–C412, C419–C429, C423–C438, C440–C449, C456–C467, C461–C476, C478–C487, C495–C506, C500–C515, C517–C526, C544–C567, C561–C577, C579–C588, C595–C606, C600–C615, C617–C626, C633–C644, C638–C653, C655–C664, C671–C682, C676–C691, and C693–C702. Positions 195–228 (KEAVCKQGCNLLHGGCTVPGECRCSYGWQGKFCD) constitute an EGF-like 1 domain. The EGF-like 2; atypical domain occupies 229 to 259 (ECVPYPGCVHGSCVEPWHCDCETNWGGLLCD). 2 EGF-like domains span residues 261 to 299 (DLNYCGSHHPCVNGGTCINAEPDQYLCACPDGYLGKNCE) and 301 to 337 (AEHACASNPCANGGSCHEVLSGFECHCPSGWSGPTCA). Positions 339–375 (DIDECASNPCAAGGTCVDQVDGFECICPEQWVGATCQ) constitute an EGF-like 5; calcium-binding domain. Residues 377–413 (DANECEGKPCLNAFSCKNLIGGYYCDCLPGWKGANCH) form the EGF-like 6; calcium-binding domain. One can recognise an EGF-like 7; calcium-binding domain in the interval 415-450 (NINDCHGQCQHGGTCKDLVNGYQCVCPRGFGGRHCE). 2 consecutive EGF-like domains span residues 452 to 488 (EYYKCASSPCRRGGICEDLVDGFRCHCPRGLSGPLCE) and 490 to 527 (DVDLWCEPNPCLNGARCYNLEDDYYCACPEDFGGKNCS). An N-linked (GlcNAc...) asparagine glycan is attached at N525. An EGF-like 10; atypical domain is found at 529–589 (PRETCPGGAC…DSGFTGTYCH (61 aa)). A glycan (N-linked (GlcNAc...) asparagine) is linked at N574. One can recognise an EGF-like 11; calcium-binding domain in the interval 591-627 (NIDDCMGQPCRNGGTCIDEVDSFACFCPSGWEGELCD). Residues 629–665 (NPNDCLPDPCHSRGRCYDLVNDFYCVCDDGWKDKTCH) form the EGF-like 12; calcium-binding domain. EGF-like domains lie at 667–703 (REFQCDAYTCSNGGTCYDSGDTFRCACPPGWKGSTCT) and 706–742 (KNSSCVPNPCVNGGTCVGSGDSFSCICRDGWEGRTCT). N707 is a glycosylation site (N-linked (GlcNAc...) asparagine). 9 disulfides stabilise this stretch: C710–C721, C715–C730, C732–C741, C748–C759, C753–C768, C770–C779, C786–C797, C791–C806, and C808–C817. The EGF-like 15; calcium-binding domain maps to 744–780 (NTNDCNPLPCYNGGICVDGVNWFRCECAPGFAGPDCR). Residues 782–818 (NIDECQSSPCAYGATCVDEINGYRCSCPPGRSGPRCQ) enclose the EGF-like 16; calcium-binding domain. N1015 is a glycosylation site (N-linked (GlcNAc...) asparagine). Residues 1038–1058 (GLLVPVLCSVFSVLWLACMVI) traverse the membrane as a helical segment. The Cytoplasmic portion of the chain corresponds to 1059–1202 (CVWWTRKRRK…TKDVRCAGRE (144 aa)). Basic and acidic residues-rich tracts occupy residues 1070-1080 (RERSRLPRDES), 1147-1159 (LSRGDGRLSRSRE), and 1185-1202 (VDNRAVRSTKDVRCAGRE). Residues 1070–1202 (RERSRLPRDE…TKDVRCAGRE (133 aa)) form a disordered region. At S1080 the chain carries Phosphoserine.

The protein localises to the membrane. Its function is as follows. Putative Notch ligand involved in the mediation of Notch signaling. May have a role in neurogenesis in the peripheral nervous system, limb development and in the adult brain. This Rattus norvegicus (Rat) protein is Protein jagged-2 (Jag2).